Here is a 582-residue protein sequence, read N- to C-terminus: Membrane-bound O-acyltransferase GUP1 (582 aa).

At 1–61 the chain is on the extracellular side; it reads MVIPRYHLIP…IIKQANPKSR (61 aa). A helical membrane pass occupies residues 62–82; it reads WSTIEFKFYYLVFLIIVPLMF. The Cytoplasmic portion of the chain corresponds to 83–121; sequence KAGMESANENNPNYPKYEHLLSNGWIFGRKVDNSDQQYR. The helical transmembrane segment at 122–144 threads the bilayer; sequence FFRNNFPLLCLLIIIHVGLRRVI. At 145-158 the chain is on the extracellular side; the sequence is NRIIPLSSKRTYFD. A helical membrane pass occupies residues 159-179; sequence FIFGIIFLIGAHGVNVLKLSI. Residues 180–195 are Cytoplasmic-facing; sequence HLLINYLIGKYIKNYK. A helical membrane pass occupies residues 196 to 216; it reads LSLWITWIYGISSLFFNEWYG. At 217–294 the chain is on the extracellular side; it reads NYTLGLSFLS…TAPLPIEDYN (78 aa). The helical transmembrane segment at 295-315 threads the bilayer; it reads IFNYISYLTYTPLFIAGPILT. Residues 316–343 lie on the Cytoplasmic side of the membrane; sequence FNDYIYQSNYQQSSSTKDYHRIMMYLIR. A helical membrane pass occupies residues 344–364; that stretch reads FIFCLLTLEFILHFMYVVAAS. Residues 365–373 lie on the Extracellular side of the membrane; the sequence is KTKSWEGNL. The helical transmembrane segment at 374–394 threads the bilayer; it reads PFQISMLGMFNLNIIWLKLLI. Residues 395–454 are Cytoplasmic-facing; the sequence is PWRLFRLWSLLDGIDPPENMIRCMDNNFSALAFWRAWHRSYNRWIIRYIYLPMGGGGKYR. 2 consecutive transmembrane segments (helical) span residues 455-475 and 476-496; these read ILNS…ELKL and LMWG…TMIF. Histidine 469 is a catalytic residue. Topologically, residues 497–507 are cytoplasmic; it reads KKYRNQWWYRH. Residues 508–528 traverse the membrane as a helical segment; it reads LCGVGAVINIWMMMIANLVGF. At 529-548 the chain is on the extracellular side; the sequence is CLGTDGMWKLLHDLFKTFDG. A helical transmembrane segment spans residues 549–569; sequence VRFLIISSGALFVGAQIMFEI. Topologically, residues 570–582 are cytoplasmic; it reads RESEMRKGINVRC.

Belongs to the membrane-bound acyltransferase family.

Its subcellular location is the cell membrane. The protein localises to the endoplasmic reticulum membrane. The protein resides in the mitochondrion membrane. Membrane-bound O-acyltransferase involved in the remodeling of glycosylphosphatidylinositol (GPI) anchors. Acts only on GPI-anchored proteins, but not on free GPI lipids. Also involved in lipid metabolism, having profound effects on sphingolipid-sterol-ordered domains integrity and assembly. Involved in cell integrity and apoptosis. This Candida tropicalis (Yeast) protein is Membrane-bound O-acyltransferase GUP1 (GUP1).